Reading from the N-terminus, the 348-residue chain is Rhodopsin (348 aa).

Methionine 1 is subject to N-acetylmethionine. Residues 1–36 are Extracellular-facing; that stretch reads MNGTEGPNFYVPFSNKTGVVRSPFEYPQYYLAEPWQ. Residues asparagine 2 and asparagine 15 are each glycosylated (N-linked (GlcNAc...) asparagine). Residues 37-61 form a helical membrane-spanning segment; sequence FSMLAAYMFLLIVLGFPINFLTLYV. At 62–73 the chain is on the cytoplasmic side; that stretch reads TVQHKKLRTPLN. A helical membrane pass occupies residues 74-96; the sequence is YILLNLAVADLFMVFGGFTTTLY. Residues 97 to 110 lie on the Extracellular side of the membrane; that stretch reads TSLHGYFVFGPTGC. A disulfide bridge links cysteine 110 with cysteine 187. Residues 111-133 traverse the membrane as a helical segment; that stretch reads NLEGFFATLGGEIALWSLVVLAI. A 'Ionic lock' involved in activated form stabilization motif is present at residues 134–136; it reads ERY. Residues 134-152 are Cytoplasmic-facing; it reads ERYVVVCKPMSNFRFGENH. Residues 153 to 173 form a helical membrane-spanning segment; the sequence is AIMGVAFTWVMALACAAPPLV. Residues 174–202 lie on the Extracellular side of the membrane; the sequence is GWSRYIPEGMQCSCGIDYYTLKPEVNNES. Residue glutamate 201 participates in Zn(2+) binding. Residues 203–224 traverse the membrane as a helical segment; sequence FVIYMFVVHFTIPMIVIFFCYG. Topologically, residues 225–252 are cytoplasmic; that stretch reads QLVFTVKEAAAQQQESATTQKAEKEVTR. A helical transmembrane segment spans residues 253–274; sequence MVIIMVIAFLICWVPYASVAFY. The Extracellular segment spans residues 275–286; sequence IFTHQGSNFGPI. Glutamine 279 serves as a coordination point for Zn(2+). Residues 287 to 308 traverse the membrane as a helical segment; that stretch reads FMTLPAFFAKSSSIYNPVIYIM. Lysine 296 carries the N6-(retinylidene)lysine modification. The Cytoplasmic segment spans residues 309–348; that stretch reads MNKQFRNCMLTTLCCGKNPLGDDEASTTGSKTETSQVAPA. S-palmitoyl cysteine attachment occurs at residues cysteine 322 and cysteine 323. The interaction with SAG stretch occupies residues 330–348; the sequence is DDEASTTGSKTETSQVAPA. A Phosphoserine modification is found at serine 334. Residues threonine 335 and threonine 336 each carry the phosphothreonine modification. Serine 338 carries the post-translational modification Phosphoserine. Phosphothreonine occurs at positions 340 and 342. Phosphoserine is present on serine 343.

The protein belongs to the G-protein coupled receptor 1 family. Opsin subfamily. Homodimer. May form a complex composed of RHO, GRK1 and RCVRN in a Ca(2+)-dependent manner; RCVRN prevents the interaction between GRK1 and RHO. Interacts with GRK1. Interacts (phosphorylated form) with SAG. Interacts with GNAT1. Interacts with GNAT3. SAG and G-proteins compete for a common binding site. Interacts with PRCD; the interaction promotes PRCD stability. Forms a complex with ASAP1 and ARF4. Forms a complex with ASAP1, RAB11A, Rabin8/RAB3IP, ARF4 and RAB11FIP3; the complex regulates Golgi-to-cilia rhodopsin/RHO transport in photoreceptors. Post-translationally, phosphorylated on some or all of the serine and threonine residues present in the C-terminal region. Contains one covalently linked retinal chromophore. Upon light absorption, the covalently bound 11-cis-retinal is converted to all-trans-retinal. After hydrolysis of the Schiff base and release of the covalently bound all-trans-retinal, active rhodopsin is regenerated by binding of a fresh molecule of 11-cis-retinal.

The protein resides in the membrane. Its subcellular location is the cell projection. The protein localises to the cilium. It localises to the photoreceptor outer segment. Photoreceptor required for image-forming vision at low light intensity. Required for photoreceptor cell viability after birth. Light-induced isomerization of 11-cis to all-trans retinal triggers a conformational change that activates signaling via G-proteins. Subsequent receptor phosphorylation mediates displacement of the bound G-protein alpha subunit by the arrestin SAG and terminates signaling. The protein is Rhodopsin (RHO) of Felis catus (Cat).